Consider the following 578-residue polypeptide: Sulfite reductase [NADPH] hemoprotein beta-component (578 aa).

The [4Fe-4S] cluster site is built by C441, C447, C487, and C491. Position 491 (C491) interacts with siroheme.

This sequence belongs to the nitrite and sulfite reductase 4Fe-4S domain family. In terms of assembly, alpha(8)-beta(8). The alpha component is a flavoprotein, the beta component is a hemoprotein. Siroheme is required as a cofactor. The cofactor is [4Fe-4S] cluster.

It carries out the reaction hydrogen sulfide + 3 NADP(+) + 3 H2O = sulfite + 3 NADPH + 4 H(+). Its pathway is sulfur metabolism; hydrogen sulfide biosynthesis; hydrogen sulfide from sulfite (NADPH route): step 1/1. Its function is as follows. Component of the sulfite reductase complex that catalyzes the 6-electron reduction of sulfite to sulfide. This is one of several activities required for the biosynthesis of L-cysteine from sulfate. This is Sulfite reductase [NADPH] hemoprotein beta-component from Vibrio vulnificus (strain CMCP6).